A 394-amino-acid chain; its full sequence is uncharacterized protein (394 aa).

2 helical membrane passes run 31 to 51 and 57 to 77; these read LAILSLFLGIAACILIALSGL and LIIALSLISIIVLSTGISLLI.

It belongs to the chlamydial CPn_0129/CT_036/TC_0306 family.

The protein localises to the cell membrane. This is an uncharacterized protein from Chlamydia pneumoniae (Chlamydophila pneumoniae).